The chain runs to 182 residues: Large ribosomal subunit protein bL25 (182 aa).

Belongs to the bacterial ribosomal protein bL25 family. CTC subfamily. As to quaternary structure, part of the 50S ribosomal subunit; part of the 5S rRNA/L5/L18/L25 subcomplex. Contacts the 5S rRNA. Binds to the 5S rRNA independently of L5 and L18.

Its function is as follows. This is one of the proteins that binds to the 5S RNA in the ribosome where it forms part of the central protuberance. This chain is Large ribosomal subunit protein bL25, found in Borrelia turicatae (strain 91E135).